The following is a 488-amino-acid chain: Multidrug resistance outer membrane protein MdtP (488 aa).

A signal peptide spans 1–23 (MINRQLSRLLLCSILGSTTLISG). Cysteine 24 carries the N-palmitoyl cysteine lipid modification. Cysteine 24 carries S-diacylglycerol cysteine lipidation.

This sequence belongs to the outer membrane factor (OMF) (TC 1.B.17) family. Could be part of a tripartite efflux system composed of MdtN, MdtO and MdtP.

It is found in the cell outer membrane. Its function is as follows. Could be involved in resistance to puromycin, acriflavine and tetraphenylarsonium chloride. This chain is Multidrug resistance outer membrane protein MdtP (mdtP), found in Escherichia coli O157:H7.